A 332-amino-acid polypeptide reads, in one-letter code: MYDLTFLLISLFPIDITLPTRQPQNKPFLLPQATYETSHNISDPAVSLHGLKMSISTTETDNFKPVHTLVSSPVTIVLTGSLLFIIFTGFFSFFFCGCLFRKLMRIWNNHRNRNRPSNLIQPSNPPENLGLDSKIIESFPEYPYSVKDHGTDQCSICLTEFMDDDTIRLISTCNHSFHTICIDLWFEGHKTCPVCRRELDVEDRTSLEKPLEVPEIDLVRSEIHDEPLPRDTVTIIVHEEHPSTTIGSLEHTDEIESYERRMKASNLRFWRSHSTGHSIVVKTENEQEEEEEEEKDEIKIRIEISGECQFEDHKMTLPNRKLYCVRGTYSVG.

The signal sequence occupies residues 1–19; sequence MYDLTFLLISLFPIDITLP. A helical membrane pass occupies residues 76 to 96; that stretch reads IVLTGSLLFIIFTGFFSFFFC. The RING-type; atypical zinc finger occupies 154 to 196; it reads CSICLTEFMDDDTIRLISTCNHSFHTICIDLWFEGHKTCPVCR.

Belongs to the RING-type zinc finger family. ATL subfamily.

The protein resides in the membrane. The catalysed reaction is S-ubiquitinyl-[E2 ubiquitin-conjugating enzyme]-L-cysteine + [acceptor protein]-L-lysine = [E2 ubiquitin-conjugating enzyme]-L-cysteine + N(6)-ubiquitinyl-[acceptor protein]-L-lysine.. It functions in the pathway protein modification; protein ubiquitination. The chain is RING-H2 finger protein ATL81 (ATL81) from Arabidopsis thaliana (Mouse-ear cress).